Here is a 126-residue protein sequence, read N- to C-terminus: Small ribosomal subunit protein uS11 (126 aa).

Belongs to the universal ribosomal protein uS11 family. Part of the 30S ribosomal subunit.

Functionally, located on the platform of the 30S subunit. This chain is Small ribosomal subunit protein uS11, found in Methanosarcina acetivorans (strain ATCC 35395 / DSM 2834 / JCM 12185 / C2A).